The primary structure comprises 64 residues: MAKNKGTRILITLECTECRSNLEKRSPGVSRYSTQKNRRNNPERLELKKYCSHCNKTTLHKEIK.

Belongs to the bacterial ribosomal protein bL33 family.

It is found in the plastid. It localises to the chloroplast. This chain is Large ribosomal subunit protein bL33c, found in Phaeodactylum tricornutum (strain CCAP 1055/1).